The following is a 489-amino-acid chain: Nuclear distribution protein PAC1 (489 aa).

Residues 66 to 98 adopt a coiled-coil conformation; that stretch reads STVLRLQKKIIDLENEISNLNNIINSSNSDNNG. WD repeat units lie at residues 119-158, 164-205, 206-246, 249-291, 328-368, 389-428, and 437-486; these read QCEN…NTIP, AHTR…RTLN, GHEH…SLKS, GHSE…GLAM, IPLE…IAPH, GHSS…ETGS, and GHDG…NSIK.

This sequence belongs to the WD repeat LIS1/nudF family. Self-associates. Interacts with NDL1 and dynein.

It is found in the cytoplasm. The protein localises to the cytoskeleton. The protein resides in the spindle pole. In terms of biological role, positively regulates the activity of the minus-end directed microtubule motor protein dynein. Plays a central role in positioning the mitotic spindle at the bud neck during cell division. Targets cytoplasmic dynein to microtubule plus ends, thereby promoting dynein-mediated microtubule sliding along the bud cortex and consequently the movement of the mitotic spindle to the bud neck. This is Nuclear distribution protein PAC1 from Candida dubliniensis (strain CD36 / ATCC MYA-646 / CBS 7987 / NCPF 3949 / NRRL Y-17841) (Yeast).